Reading from the N-terminus, the 374-residue chain is Tetraacyldisaccharide 4'-kinase (374 aa).

43 to 50 is a binding site for ATP; the sequence is TMGGTGKT.

This sequence belongs to the LpxK family.

The catalysed reaction is a lipid A disaccharide + ATP = a lipid IVA + ADP + H(+). It functions in the pathway glycolipid biosynthesis; lipid IV(A) biosynthesis; lipid IV(A) from (3R)-3-hydroxytetradecanoyl-[acyl-carrier-protein] and UDP-N-acetyl-alpha-D-glucosamine: step 6/6. Functionally, transfers the gamma-phosphate of ATP to the 4'-position of a tetraacyldisaccharide 1-phosphate intermediate (termed DS-1-P) to form tetraacyldisaccharide 1,4'-bis-phosphate (lipid IVA). This is Tetraacyldisaccharide 4'-kinase from Leptospira biflexa serovar Patoc (strain Patoc 1 / Ames).